The sequence spans 260 residues: Small ribosomal subunit protein uS2 (260 aa).

Belongs to the universal ribosomal protein uS2 family.

This chain is Small ribosomal subunit protein uS2, found in Streptococcus sanguinis (strain SK36).